The sequence spans 328 residues: Beta-ketoacyl-[acyl-carrier-protein] synthase III (328 aa).

Residues C122 and H255 contribute to the active site. The ACP-binding stretch occupies residues 256-260 (QANIR). The active site involves N285.

This sequence belongs to the thiolase-like superfamily. FabH family. As to quaternary structure, homodimer.

Its subcellular location is the cytoplasm. The catalysed reaction is malonyl-[ACP] + acetyl-CoA + H(+) = 3-oxobutanoyl-[ACP] + CO2 + CoA. It participates in lipid metabolism; fatty acid biosynthesis. Catalyzes the condensation reaction of fatty acid synthesis by the addition to an acyl acceptor of two carbons from malonyl-ACP. Catalyzes the first condensation reaction which initiates fatty acid synthesis and may therefore play a role in governing the total rate of fatty acid production. Possesses both acetoacetyl-ACP synthase and acetyl transacylase activities. Its substrate specificity determines the biosynthesis of branched-chain and/or straight-chain of fatty acids. This chain is Beta-ketoacyl-[acyl-carrier-protein] synthase III, found in Polynucleobacter asymbioticus (strain DSM 18221 / CIP 109841 / QLW-P1DMWA-1) (Polynucleobacter necessarius subsp. asymbioticus).